The primary structure comprises 264 residues: Electron transfer flavoprotein subunit beta (264 aa).

AMP-binding positions include A6, 36 to 39 (NEWD), V64, 119 to 122 (GVQS), and 127 to 130 (YAST).

As to quaternary structure, heterodimer of an alpha and a beta subunit. Forms a ternary complex with trimethylamine dehydrogenase.

In terms of biological role, heterodimeric electron transfer flavoprotein that accepts electrons from trimethylamine dehydrogenase. It transfers the electrons to the main respiratory chain via ETF-ubiquinone oxidoreductase (ETF dehydrogenase). EtfB binds an AMP molecule that probably has a purely structural role. In Methylophilus methylotrophus (Bacterium W3A1), this protein is Electron transfer flavoprotein subunit beta (etfB).